The primary structure comprises 728 residues: Polyribonucleotide nucleotidyltransferase (728 aa).

Mg(2+) is bound by residues D489 and D495. The KH domain occupies 556–615 (PKIDTIKIDVDKIKIVIGKGGETIDKIIAETGVKIDIDEEGNVSIYSSDQDAINRAKEII). Residues 625–693 (DEVYHAKVVR…AKGRVDASMK (69 aa)) form the S1 motif domain. The tract at residues 691-728 (SMKALLPRPPKPEKSDKHHDKGHPHKKHEEAPLTQTEE) is disordered. A compositionally biased stretch (basic and acidic residues) spans 700–709 (PKPEKSDKHH).

Belongs to the polyribonucleotide nucleotidyltransferase family. It depends on Mg(2+) as a cofactor.

It localises to the cytoplasm. It carries out the reaction RNA(n+1) + phosphate = RNA(n) + a ribonucleoside 5'-diphosphate. Functionally, involved in mRNA degradation. Catalyzes the phosphorolysis of single-stranded polyribonucleotides processively in the 3'- to 5'-direction. The polypeptide is Polyribonucleotide nucleotidyltransferase (Streptococcus gordonii (strain Challis / ATCC 35105 / BCRC 15272 / CH1 / DL1 / V288)).